The following is a 193-amino-acid chain: Peptidyl-tRNA hydrolase (193 aa).

Tyr-16 lines the tRNA pocket. His-21 (proton acceptor) is an active-site residue. Residues Phe-66, Asn-68, and Asn-114 each contribute to the tRNA site.

This sequence belongs to the PTH family. Monomer.

Its subcellular location is the cytoplasm. It carries out the reaction an N-acyl-L-alpha-aminoacyl-tRNA + H2O = an N-acyl-L-amino acid + a tRNA + H(+). Hydrolyzes ribosome-free peptidyl-tRNAs (with 1 or more amino acids incorporated), which drop off the ribosome during protein synthesis, or as a result of ribosome stalling. In terms of biological role, catalyzes the release of premature peptidyl moieties from peptidyl-tRNA molecules trapped in stalled 50S ribosomal subunits, and thus maintains levels of free tRNAs and 50S ribosomes. This is Peptidyl-tRNA hydrolase from Pelobacter propionicus (strain DSM 2379 / NBRC 103807 / OttBd1).